The sequence spans 104 residues: Iron-sulfur cluster assembly protein CyaY (104 aa).

This sequence belongs to the frataxin family.

Functionally, involved in iron-sulfur (Fe-S) cluster assembly. May act as a regulator of Fe-S biogenesis. This Aeromonas hydrophila subsp. hydrophila (strain ATCC 7966 / DSM 30187 / BCRC 13018 / CCUG 14551 / JCM 1027 / KCTC 2358 / NCIMB 9240 / NCTC 8049) protein is Iron-sulfur cluster assembly protein CyaY.